A 123-amino-acid chain; its full sequence is Large ribosomal subunit protein eL8 (123 aa).

It belongs to the eukaryotic ribosomal protein eL8 family. As to quaternary structure, part of the 50S ribosomal subunit. Probably part of the RNase P complex.

The protein resides in the cytoplasm. Multifunctional RNA-binding protein that recognizes the K-turn motif in ribosomal RNA, the RNA component of RNase P, box H/ACA, box C/D and box C'/D' sRNAs. This Methanobrevibacter smithii (strain ATCC 35061 / DSM 861 / OCM 144 / PS) protein is Large ribosomal subunit protein eL8.